The following is a 176-amino-acid chain: Translation initiation factor IF-3 (176 aa).

Belongs to the IF-3 family. Monomer.

It is found in the cytoplasm. In terms of biological role, IF-3 binds to the 30S ribosomal subunit and shifts the equilibrium between 70S ribosomes and their 50S and 30S subunits in favor of the free subunits, thus enhancing the availability of 30S subunits on which protein synthesis initiation begins. This chain is Translation initiation factor IF-3, found in Streptococcus pyogenes serotype M4 (strain MGAS10750).